Consider the following 378-residue polypeptide: uncharacterized protein (378 aa).

Residues 1 to 11 (MSQQTTPAEQK) show a composition bias toward polar residues. The disordered stretch occupies residues 1–33 (MSQQTTPAEQKSLQRKKPPFRADQVGSLLRSEP).

It to B.subtilis YxjH.

This is an uncharacterized protein from Bacillus subtilis (strain 168).